The following is a 505-amino-acid chain: MIPKVSKIIPWIKDNKKFLKKTYKGIERESLRIDIDGNISKKPHPIIFGSPLTHNWITTDFSESLLELITPVSNSKKYTINFLNDLHIFIIKNLINENLWPMSMPCKINNDSSIIIAQYGNSKLGRTKTIYRNGLKNRYGAKMQIISGVHYNFSFHKDFWKKYNNFYKIQDKFSSIGYFNLIRNYYRFGWIIPYFFGASPIAHSSFFKGLNTDLIFKKNKFGDIYLPFSTSLRLSEIGYINKVQKKIKLKFNNIEEYVDIVKKAMKTPYLNYKKIELKNNEKNLQINVNLLQKENELYSHVRPKRSLNKNKYKLEDLIYKGIEYIEIRSLDVNPFSPIGIKINQIYFLDIFLIWCILIESPKINDEELRSINENWNRVILYGRNPKIKLINFFKKKEKKLSEILKFILNDLQILVESLAFKKNNKIYQKIFFDLHKMTDNPNKTLSGKLLEESIEYGVERLGLDMSKSHKINIENKKLKVINYQSLIKEAEKSIKEQIVLEKNET.

It belongs to the glutamate--cysteine ligase type 1 family. Type 1 subfamily.

It catalyses the reaction L-cysteine + L-glutamate + ATP = gamma-L-glutamyl-L-cysteine + ADP + phosphate + H(+). Its pathway is sulfur metabolism; glutathione biosynthesis; glutathione from L-cysteine and L-glutamate: step 1/2. The polypeptide is Glutamate--cysteine ligase (Wigglesworthia glossinidia brevipalpis).